The chain runs to 258 residues: Imidazole glycerol phosphate synthase subunit HisF (258 aa).

Residues D11 and D130 contribute to the active site.

It belongs to the HisA/HisF family. Heterodimer of HisH and HisF.

The protein localises to the cytoplasm. The enzyme catalyses 5-[(5-phospho-1-deoxy-D-ribulos-1-ylimino)methylamino]-1-(5-phospho-beta-D-ribosyl)imidazole-4-carboxamide + L-glutamine = D-erythro-1-(imidazol-4-yl)glycerol 3-phosphate + 5-amino-1-(5-phospho-beta-D-ribosyl)imidazole-4-carboxamide + L-glutamate + H(+). Its pathway is amino-acid biosynthesis; L-histidine biosynthesis; L-histidine from 5-phospho-alpha-D-ribose 1-diphosphate: step 5/9. IGPS catalyzes the conversion of PRFAR and glutamine to IGP, AICAR and glutamate. The HisF subunit catalyzes the cyclization activity that produces IGP and AICAR from PRFAR using the ammonia provided by the HisH subunit. The sequence is that of Imidazole glycerol phosphate synthase subunit HisF from Azorhizobium caulinodans (strain ATCC 43989 / DSM 5975 / JCM 20966 / LMG 6465 / NBRC 14845 / NCIMB 13405 / ORS 571).